We begin with the raw amino-acid sequence, 445 residues long: Tubulin beta-2 chain (445 aa).

Residues glutamine 12, glutamate 73, serine 142, glycine 146, threonine 147, glycine 148, asparagine 208, and asparagine 230 each coordinate GTP. Glutamate 73 lines the Mg(2+) pocket.

It belongs to the tubulin family. As to quaternary structure, dimer of alpha and beta chains. A typical microtubule is a hollow water-filled tube with an outer diameter of 25 nm and an inner diameter of 15 nM. Alpha-beta heterodimers associate head-to-tail to form protofilaments running lengthwise along the microtubule wall with the beta-tubulin subunit facing the microtubule plus end conferring a structural polarity. Microtubules usually have 13 protofilaments but different protofilament numbers can be found in some organisms and specialized cells. Mg(2+) is required as a cofactor.

The protein resides in the cytoplasm. It localises to the cytoskeleton. Tubulin is the major constituent of microtubules, a cylinder consisting of laterally associated linear protofilaments composed of alpha- and beta-tubulin heterodimers. Microtubules grow by the addition of GTP-tubulin dimers to the microtubule end, where a stabilizing cap forms. Below the cap, tubulin dimers are in GDP-bound state, owing to GTPase activity of alpha-tubulin. This Suillus bovinus (Jersey cow bolete) protein is Tubulin beta-2 chain (TUBB2).